The primary structure comprises 124 residues: Small ribosomal subunit protein uS12 (124 aa).

Asp-89 is modified (3-methylthioaspartic acid). Residues 105–124 are disordered; it reads SGVSDRRQGRSKYGAKRPKS. The span at 113 to 124 shows a compositional bias: basic residues; it reads GRSKYGAKRPKS.

Belongs to the universal ribosomal protein uS12 family. Part of the 30S ribosomal subunit. Contacts proteins S8 and S17. May interact with IF1 in the 30S initiation complex.

Its function is as follows. With S4 and S5 plays an important role in translational accuracy. In terms of biological role, interacts with and stabilizes bases of the 16S rRNA that are involved in tRNA selection in the A site and with the mRNA backbone. Located at the interface of the 30S and 50S subunits, it traverses the body of the 30S subunit contacting proteins on the other side and probably holding the rRNA structure together. The combined cluster of proteins S8, S12 and S17 appears to hold together the shoulder and platform of the 30S subunit. The chain is Small ribosomal subunit protein uS12 from Colwellia psychrerythraea (strain 34H / ATCC BAA-681) (Vibrio psychroerythus).